A 127-amino-acid polypeptide reads, in one-letter code: Small ribosomal subunit protein uS13 (127 aa).

Positions 97-127 (PVRGQRTRTNARTRRGRRVTVAGKKKAPSKK) are disordered. The span at 101 to 127 (QRTRTNARTRRGRRVTVAGKKKAPSKK) shows a compositional bias: basic residues.

This sequence belongs to the universal ribosomal protein uS13 family. Part of the 30S ribosomal subunit. Forms a loose heterodimer with protein S19. Forms two bridges to the 50S subunit in the 70S ribosome.

Functionally, located at the top of the head of the 30S subunit, it contacts several helices of the 16S rRNA. In the 70S ribosome it contacts the 23S rRNA (bridge B1a) and protein L5 of the 50S subunit (bridge B1b), connecting the 2 subunits; these bridges are implicated in subunit movement. Contacts the tRNAs in the A and P-sites. The chain is Small ribosomal subunit protein uS13 from Microcystis aeruginosa (strain NIES-843 / IAM M-2473).